A 498-amino-acid polypeptide reads, in one-letter code: Alpha-amylase A (498 aa).

The N-terminal stretch at 1 to 21 (MMVAWWSLFLYGLQVAAPALA) is a signal peptide. Residues Cys51 and Cys59 are joined by a disulfide bond. Residues Gln56 and Trp104 each contribute to the substrate site. Asn142 contacts Ca(2+). His143 is a binding site for substrate. Residues Cys171 and Cys185 are joined by a disulfide bond. Positions 183 and 196 each coordinate Ca(2+). N-linked (GlcNAc...) asparagine glycosylation occurs at Asn218. Arg225 is a binding site for substrate. The Ca(2+) site is built by Asp227, His231, and Glu251. Asp227 serves as the catalytic Nucleophile. 230-231 (KH) lines the substrate pocket. The active-site Proton donor is Glu251. Gly255 lines the substrate pocket. Cys261 and Cys304 are disulfide-bonded. Substrate-binding residues include Asp318 and Arg365. A disulfide bridge connects residues Cys461 and Cys496.

It belongs to the glycosyl hydrolase 13 family. Requires Ca(2+) as cofactor.

It catalyses the reaction Endohydrolysis of (1-&gt;4)-alpha-D-glucosidic linkages in polysaccharides containing three or more (1-&gt;4)-alpha-linked D-glucose units.. This Aspergillus awamori (Black koji mold) protein is Alpha-amylase A (amyA).